Consider the following 1784-residue polypeptide: Sodium channel protein type 4 subunit alpha B (1784 aa).

Over 1-130 the chain is Cytoplasmic; that stretch reads MARLLPPTGT…RAAIRILIHS (130 aa). A disordered region spans residues 29–48; the sequence is AEEAAEQERMKEQNVKVAEE. An I repeat occupies 112–429; sequence CLSPFNPVRR…VVAMAYAEQN (318 aa). The helical transmembrane segment at 131-149 threads the bilayer; that stretch reads LFSLVIMLTILTNCVFMAM. Residues 150-156 lie on the Extracellular side of the membrane; that stretch reads SDPPGWS. A helical membrane pass occupies residues 157-177; sequence KILEYVFTGIYTFEAMVKVLS. At 178–191 the chain is on the cytoplasmic side; it reads RGFCIGDFTFLRDP. The helical transmembrane segment at 192-209 threads the bilayer; it reads WNWLDFMVISMAYLTEFV. Over 210-215 the chain is Extracellular; that stretch reads DLGNIS. An N-linked (GlcNAc...) asparagine glycan is attached at Asn213. A helical transmembrane segment spans residues 216 to 232; the sequence is ALRTFRVLRALKTITVI. Residues 233–251 are Cytoplasmic-facing; that stretch reads PGLKTIVGALIQSVKKLAD. A helical membrane pass occupies residues 252–271; it reads VMILTVFCLSVFALIGLQLF. Over 272-366 the chain is Extracellular; it reads MGNLRQKCVL…PNYGYTSYDN (95 aa). A disulfide bridge connects residues Cys279 and Cys335. Residues Asn291, Asn304, and Asn337 are each glycosylated (N-linked (GlcNAc...) asparagine). Cysteines 344 and 350 form a disulfide. The segment at residues 367-391 is an intramembrane region (pore-forming); the sequence is FGWAFLALFRLMTQDFWENLFQLTL. Residues 392-398 are Extracellular-facing; that stretch reads RAAGKTY. Residues 399–419 form a helical membrane-spanning segment; the sequence is MIFFVVIIFLGSFYLINLILA. Over 420-568 the chain is Cytoplasmic; it reads VVAMAYAEQN…RIVYLFVMDP (149 aa). The segment at 455 to 478 is disordered; the sequence is EQKNGMVNGSKTSLSSKKKGDNDQ. An II repeat occupies 550–821; that stretch reads CCIPWVKFKR…QIAISRITRG (272 aa). The helical transmembrane segment at 569 to 587 threads the bilayer; it reads FVDLGITLCIVLNTVFMAM. The Extracellular portion of the chain corresponds to 588 to 598; sequence EHYPMSVHVEE. A helical transmembrane segment spans residues 599–618; sequence VLAIGNLVFTGIFAAEMVLK. Topologically, residues 619 to 632 are cytoplasmic; sequence LIALDPYYYFQVGW. The helical transmembrane segment at 633 to 652 threads the bilayer; that stretch reads NIFDSIIVTMSLVELMLADV. At 653–654 the chain is on the extracellular side; the sequence is EG. A helical transmembrane segment spans residues 655–672; it reads LSVLRSFRLMRVFKLAKS. Over 673–688 the chain is Cytoplasmic; it reads WPTLNMLIKIIGNSVG. A helical membrane pass occupies residues 689–707; it reads ALGNLTLVLAIIVFIFAVV. Residues 708 to 736 are Extracellular-facing; it reads GMQLFGKSYTDSVCKISSDCELPRWHMAD. An intrachain disulfide couples Cys721 to Cys727. Residues 737–757 constitute an intramembrane region (pore-forming); sequence FFHAFLIIFRVLCGEWIETMW. The Extracellular segment spans residues 758-768; it reads DCMEVAGQGMC. Cys759 and Cys768 form a disulfide bridge. The helical transmembrane segment at 769-787 threads the bilayer; the sequence is IIVFMMVMVIGNLVVLNLF. The Cytoplasmic segment spans residues 788 to 973; that stretch reads LALLLSSFSG…TCFAIVEHSY (186 aa). Residues 870-928 are disordered; that stretch reads PIANGESDDDDGNGSSEDEDDEGRDINMKKKNGDESSTCSTVDKPPEVEDLVEEEEEDL. The span at 875–892 shows a compositional bias: acidic residues; that stretch reads ESDDDDGNGSSEDEDDEG. Over residues 893-903 the composition is skewed to basic and acidic residues; that stretch reads RDINMKKKNGD. A compositionally biased stretch (acidic residues) spans 917–928; sequence VEDLVEEEEEDL. One copy of the III repeat lies at 954 to 1269; the sequence is KGKAWWNFRK…KKYYNAMKKL (316 aa). The chain crosses the membrane as a helical span at residues 974 to 991; it reads FETFIIFMILLSSGALAF. Residues 992–1004 lie on the Extracellular side of the membrane; that stretch reads EDIYIEQRRMIKI. A helical membrane pass occupies residues 1005 to 1023; that stretch reads ILEYADQVFTYVFVVEMLL. Residues 1024–1037 lie on the Cytoplasmic side of the membrane; sequence KWVAYGFKVYFTNA. The chain crosses the membrane as a helical span at residues 1038 to 1056; the sequence is WCWLDFLIVDVSLISLTAN. The Extracellular portion of the chain corresponds to 1057–1064; sequence ILGYSELG. Residues 1065 to 1083 traverse the membrane as a helical segment; that stretch reads AIKSLRTLRALRPLRALSR. Residues 1084–1101 are Cytoplasmic-facing; the sequence is FEGMRVVVVNALVGAIPS. Residues 1102-1121 traverse the membrane as a helical segment; it reads IFNVLLVCLIFWLIFSIMGV. Residues 1122–1173 are Extracellular-facing; it reads NLFAGKFYYCFNETSEEVFDHNVVNNKTDCYELMEFHPEVRWMNGKINFDNV. Residues Cys1131 and Cys1151 are joined by a disulfide bond. 2 N-linked (GlcNAc...) asparagine glycosylation sites follow: Asn1133 and Asn1147. The pore-forming intramembrane region spans 1174–1195; it reads GMGYLALLQVATFKGWMDIMYS. Topologically, residues 1196–1212 are extracellular; the sequence is AVDSRAIESQPVYEANL. The helical transmembrane segment at 1213–1234 threads the bilayer; that stretch reads YMYIYFVIFIIFGSFFTLNLFI. Over 1235–1297 the chain is Cytoplasmic; sequence GVIIDNFNQQ…LVFDFVTQQF (63 aa). An important for rapid channel inactivation region spans residues 1253-1255; sequence IFM. An IV repeat occupies 1278 to 1575; sequence IPRPTNCCQG…WEKFDPTASQ (298 aa). A helical transmembrane segment spans residues 1298-1315; that stretch reads FDIFIMVMICLNMVTMMV. Topologically, residues 1316–1326 are extracellular; it reads ETDDQSAEIEE. The chain crosses the membrane as a helical span at residues 1327-1345; the sequence is ILFYINFAFIILFTGECVL. Residues 1346-1357 are Cytoplasmic-facing; the sequence is KITALRYHYFSI. The helical transmembrane segment at 1358–1375 threads the bilayer; that stretch reads GWNIFDFVVVILSILGIG. The Extracellular segment spans residues 1376–1388; that stretch reads LADLIEKYFVSPT. Residues 1389–1405 form a helical membrane-spanning segment; that stretch reads LFRVIRLARIGRVLRLI. At 1406–1424 the chain is on the cytoplasmic side; the sequence is RGAKGIRTLLFALMMSLPA. A helical transmembrane segment spans residues 1425–1442; sequence LFNIGLLLFLIMFIFSIF. Residues 1443–1464 are Extracellular-facing; that stretch reads GMSNFAYVKKEVGIDDMMNFET. The pore-forming intramembrane region spans 1465–1487; that stretch reads FGNSIICMFMITTSAGWDGLLAP. The Extracellular portion of the chain corresponds to 1488–1516; the sequence is ILNSPPDCDPDVDNPGSTTRGNCGNAAVG. The cysteines at positions 1495 and 1510 are disulfide-linked. A helical membrane pass occupies residues 1517–1539; the sequence is IVFFCSYIVMSFLVVVNMYIAII. The Cytoplasmic segment spans residues 1540–1784; it reads LENFNVATEE…AADNLRESIV (245 aa). The region spanning 1669-1698 is the IQ domain; that stretch reads EEVAASTIQRAYRSHILKRCVKQASYMYRD.

This sequence belongs to the sodium channel (TC 1.A.1.10) family. Nav1.4/SCN4A subfamily. In terms of assembly, voltage-gated sodium (Nav) channels consist of an ion-conducting alpha subunit which is functional on its own associated with regulatory beta subunits. Post-translationally, lacks the cysteine which covalently binds the conotoxin GVIIJ. This cysteine (position 719) is speculated in other sodium channel subunits alpha to be implied in covalent binding with the sodium channel subunit beta-2 or beta-4. In terms of tissue distribution, expressed in skeletal muscle, heart, brain, spinal cord, and eye.

It localises to the cell membrane. The enzyme catalyses Na(+)(in) = Na(+)(out). Pore-forming subunit of a voltage-gated sodium (Nav) channel that directly mediates the depolarizing phase of action potentials in excitable membranes. Navs, also called VGSCs (voltage-gated sodium channels) or VDSCs (voltage-dependent sodium channels), operate by switching between closed and open conformations depending on the voltage difference across the membrane. In the open conformation they allow Na(+) ions to selectively pass through the pore, along their electrochemical gradient. The influx of Na+ ions provokes membrane depolarization, initiating the propagation of electrical signals throughout cells and tissues. This Danio rerio (Zebrafish) protein is Sodium channel protein type 4 subunit alpha B (scn4ab).